A 131-amino-acid polypeptide reads, in one-letter code: MPVTDSIADFITRIRNAGRARNKTTDIPYSKLRENMSQLLLEKGYIKNFTVITTEKFPIIRVDLKYGATGESAIKEITRVSKPGRRVYDGKDIKKYLGGLGLYILSSSKGIITDKEARAQGVGGEVLFRIY.

Belongs to the universal ribosomal protein uS8 family. In terms of assembly, part of the 30S ribosomal subunit. Contacts proteins S5 and S12.

Its function is as follows. One of the primary rRNA binding proteins, it binds directly to 16S rRNA central domain where it helps coordinate assembly of the platform of the 30S subunit. The sequence is that of Small ribosomal subunit protein uS8 from Chlorobium phaeobacteroides (strain DSM 266 / SMG 266 / 2430).